The chain runs to 509 residues: Cytochrome P450 monooxygenase fumoA (509 aa).

A helical membrane pass occupies residues 5 to 27 (LANLNFPYLILSACLSAILLSRF). Asn-317, Asn-369, and Asn-378 each carry an N-linked (GlcNAc...) asparagine glycan. Cys-456 lines the heme pocket. Asn-464 is a glycosylation site (N-linked (GlcNAc...) asparagine).

This sequence belongs to the cytochrome P450 family. Heme serves as cofactor.

It localises to the membrane. Its pathway is secondary metabolite biosynthesis. Cytochrome P450 monooxygenase; part of the gene cluster that mediates the biosynthesis of fumosorinone, a 2-pyridone alkaloid that acts as an inhibitor of protein tyrosine phosphatase 1B which is implicated asa negative regulator of insulin receptor signaling and a potential drug target for the treatment of type II diabetes and other associated metabolic syndromes. The polyketide-amino acid backbone of fumosorinone is first assembled by the PKS-NRPS hybrid fumoS. The PKS modules condense one acetyl-CoA starter unit with 7 malonyl-CoA units, programmed C-methylations occurring after the first 3 and the sixth extensions, and cycles of full reduction occurring after the first 2 extensions. Because fumoS lacks a designated enoyl reductase (ER) domain, the required activity is provided the enoyl reductase fumoC. Upon formation of the polyketide backbone on the thiotemplate, the polyketide is transferred to the NRPS module and linked to tyrosine to produce the acyltetramic acid intermediate called prefumosorinone A. The cytochrome P450 monooxygenase fumoA then probably catalyzes an unprecedented oxidative ring expansion of prefumosorinone A to form prefumosorinone B which contains the 2-pyridone core of fumosorinone. The cytochrome P450 monooxygenase fumoB might hydroxylate the nitrogen of prefumosorinone B, but not the acyltetramic acid prefumosorinone A, to form fumosorinone. This Cordyceps fumosorosea (strain ARSEF 2679) (Isaria fumosorosea) protein is Cytochrome P450 monooxygenase fumoA.